The primary structure comprises 152 residues: Nucleoside diphosphate kinase (152 aa).

ATP-binding residues include Lys11, Phe59, Arg87, Thr93, Arg104, and Asn114. His117 (pros-phosphohistidine intermediate) is an active-site residue.

Belongs to the NDK family. As to quaternary structure, homotetramer. Mg(2+) is required as a cofactor.

It is found in the cytoplasm. The catalysed reaction is a 2'-deoxyribonucleoside 5'-diphosphate + ATP = a 2'-deoxyribonucleoside 5'-triphosphate + ADP. It carries out the reaction a ribonucleoside 5'-diphosphate + ATP = a ribonucleoside 5'-triphosphate + ADP. Its function is as follows. Major role in the synthesis of nucleoside triphosphates other than ATP. The ATP gamma phosphate is transferred to the NDP beta phosphate via a ping-pong mechanism, using a phosphorylated active-site intermediate. This chain is Nucleoside diphosphate kinase, found in Prochlorococcus marinus (strain MIT 9313).